The following is a 413-amino-acid chain: Interferon-inducible GTPase 1 (413 aa).

Gly2 carries N-myristoyl glycine lipidation. Positions 68 to 250 constitute an IRG-type G domain; it reads SVLNVAVTGE…PVLMDKLISD (183 aa). Residues Gly79, Gly81, Lys82, Ser83, Ser84, Thr102, and Gly103 each coordinate GDP. Thr102 bears the (Microbial infection) Phosphothreonine; by ROP18 mark. Thr108 bears the (Microbial infection) Phosphothreonine; by ROP18 mark. Residues Lys184, Asp186, Ser187, and Asn232 each coordinate GDP. The cysteines at positions 236 and 410 are disulfide-linked.

The protein belongs to the TRAFAC class dynamin-like GTPase superfamily. IRG family. As to quaternary structure, monomer, as apoenzyme and in the GDP-bound form. Homooligomer, upon GTP binding. Interacts with HOOK3. In terms of assembly, (Microbial infection) Interacts with Toxoplasma gondii GRA7 in GTP-dependent manner; the interaction results in faster turnover of the GTP-activated IIGP1 oligomer. Interacts with T.gondii ROP5; the interaction results in inhibition of IRGA6/IIGP1 GTPase activity and oligomerization. Post-translationally, myristoylated. (Microbial infection) Phosphorylated by Toxoplasma gondii ROP18 from virulent strains.

It is found in the cytoplasm. It localises to the nucleus membrane. Its subcellular location is the endoplasmic reticulum membrane. The protein localises to the golgi apparatus. The protein resides in the golgi stack membrane. It is found in the parasitophorous vacuole membrane. The enzyme catalyses GTP + H2O = GDP + phosphate + H(+). Its function is as follows. GTPase with low activity. Has higher affinity for GDP than for GTP. Plays a role in resistance to intracellular pathogens. During infection with avirulent Toxoplasma gondii strains, recruited to the parasitophorous vacuole membrane. Required for disruption of the parasitophorous vacuole formed following T.gondii infection and subsequent killing of the parasite. Mediates resistance to Chlamydia trachomatis infection by targeting bacterial inclusions to autophagosomes for subsequent lysosomal destruction. In Mus musculus (Mouse), this protein is Interferon-inducible GTPase 1 (Iigp1).